A 381-amino-acid chain; its full sequence is MPVHDDHCNPNPAPLYLGLMSGTSIDGIDAALVRINANPITHCELIAAQTSAWDPNLRTTLLELSQGQNTASLDQLGWLDAQVGLAFATAANTLIAKTGIKHTQIRAIGSHGQTIRHRPHGDLPFTWQLGDAHRIAELTGITTVADFRRRDVAAGGQGAPLMPAFHLAILGSANENRAVLNLGGIANLTLIPMTGPVLGFDTGPANALLDSWYQRHHHETFDQSGNFAASGKINQKLLACLLDDPWFTLPPPKSTGREQFHLDWMTKQLEPTPPSPADVQATLLELTAVTVADALLRQQPKTTRLLICGGGAHNPVLMARLATHLPNVTVESIQTYGLNPDYLEAMGFAWLAAQTLDGQPSNLPSVTGARGLRLLGAIHPA.

Position 22 to 29 (22 to 29 (GTSIDGID)) interacts with ATP.

The protein belongs to the anhydro-N-acetylmuramic acid kinase family.

The catalysed reaction is 1,6-anhydro-N-acetyl-beta-muramate + ATP + H2O = N-acetyl-D-muramate 6-phosphate + ADP + H(+). The protein operates within amino-sugar metabolism; 1,6-anhydro-N-acetylmuramate degradation. Its pathway is cell wall biogenesis; peptidoglycan recycling. Functionally, catalyzes the specific phosphorylation of 1,6-anhydro-N-acetylmuramic acid (anhMurNAc) with the simultaneous cleavage of the 1,6-anhydro ring, generating MurNAc-6-P. Is required for the utilization of anhMurNAc either imported from the medium or derived from its own cell wall murein, and thus plays a role in cell wall recycling. The sequence is that of Anhydro-N-acetylmuramic acid kinase from Xylella fastidiosa (strain Temecula1 / ATCC 700964).